A 404-amino-acid chain; its full sequence is Phosphopentomutase (404 aa).

Aspartate 10, aspartate 303, histidine 308, aspartate 344, histidine 345, and histidine 356 together coordinate Mn(2+).

Belongs to the phosphopentomutase family. Requires Mn(2+) as cofactor.

It localises to the cytoplasm. The enzyme catalyses 2-deoxy-alpha-D-ribose 1-phosphate = 2-deoxy-D-ribose 5-phosphate. It catalyses the reaction alpha-D-ribose 1-phosphate = D-ribose 5-phosphate. It participates in carbohydrate degradation; 2-deoxy-D-ribose 1-phosphate degradation; D-glyceraldehyde 3-phosphate and acetaldehyde from 2-deoxy-alpha-D-ribose 1-phosphate: step 1/2. Isomerase that catalyzes the conversion of deoxy-ribose 1-phosphate (dRib-1-P) and ribose 1-phosphate (Rib-1-P) to deoxy-ribose 5-phosphate (dRib-5-P) and ribose 5-phosphate (Rib-5-P), respectively. This chain is Phosphopentomutase, found in Shewanella baltica (strain OS185).